We begin with the raw amino-acid sequence, 153 residues long: Regulator of ribonuclease activity B (153 aa).

Residues 114–153 (DPNADDDEYGDDGEFLDDEDEYGDDGEFFDDEDEEEPRVH) form a disordered region. Positions 115–153 (PNADDDEYGDDGEFLDDEDEYGDDGEFFDDEDEEEPRVH) are enriched in acidic residues.

This sequence belongs to the RraB family. In terms of assembly, interacts with the C-terminal region of Rne.

It is found in the cytoplasm. Functionally, globally modulates RNA abundance by binding to RNase E (Rne) and regulating its endonucleolytic activity. Can modulate Rne action in a substrate-dependent manner by altering the composition of the degradosome. The polypeptide is Regulator of ribonuclease activity B (Haemophilus influenzae (strain ATCC 51907 / DSM 11121 / KW20 / Rd)).